A 480-amino-acid polypeptide reads, in one-letter code: Glycogen synthase (480 aa).

Lys15 provides a ligand contact to ADP-alpha-D-glucose.

Belongs to the glycosyltransferase 1 family. Bacterial/plant glycogen synthase subfamily.

The catalysed reaction is [(1-&gt;4)-alpha-D-glucosyl](n) + ADP-alpha-D-glucose = [(1-&gt;4)-alpha-D-glucosyl](n+1) + ADP + H(+). It functions in the pathway glycan biosynthesis; glycogen biosynthesis. In terms of biological role, synthesizes alpha-1,4-glucan chains using ADP-glucose. This Pasteurella multocida (strain Pm70) protein is Glycogen synthase.